The chain runs to 188 residues: Preprocaerulein type-1 (188 aa).

An N-terminal signal peptide occupies residues 1-26; that stretch reads MFKGILLCVLFAVLSANPLSQPEGFA. Positions 27–170 are excised as a propeptide; it reads DEERDVRGLA…ANDERRFADG (144 aa). The tract at residues 152 to 188 is disordered; it reads LGGSPQQREANDERRFADGQQDYTGWMDFGRRNGEDD. Tyr174 is subject to Sulfotyrosine. Phe180 carries the post-translational modification Phenylalanine amide. Residues 184–188 constitute a propeptide that is removed on maturation; the sequence is NGEDD.

The protein belongs to the gastrin/cholecystokinin family. Expressed by the skin glands.

The protein localises to the secreted. In terms of biological role, the pharmacological activities of caerulein are quite similar to the physiological activities of gastrin and related peptides. This Xenopus laevis (African clawed frog) protein is Preprocaerulein type-1.